Here is a 561-residue protein sequence, read N- to C-terminus: Lysine--tRNA ligase (561 aa).

Mg(2+)-binding residues include glutamate 409 and glutamate 416.

It belongs to the class-II aminoacyl-tRNA synthetase family. As to quaternary structure, homodimer. Requires Mg(2+) as cofactor.

It is found in the cytoplasm. It catalyses the reaction tRNA(Lys) + L-lysine + ATP = L-lysyl-tRNA(Lys) + AMP + diphosphate. This chain is Lysine--tRNA ligase, found in Trichormus variabilis (strain ATCC 29413 / PCC 7937) (Anabaena variabilis).